The sequence spans 475 residues: Ribulose bisphosphate carboxylase large chain (475 aa).

The propeptide occupies 1 to 2 (MV). Proline 3 is subject to N-acetylproline. At lysine 14 the chain carries N6,N6,N6-trimethyllysine. Substrate is bound by residues asparagine 123 and threonine 173. Lysine 175 (proton acceptor) is an active-site residue. Lysine 177 provides a ligand contact to substrate. The Mg(2+) site is built by lysine 201, aspartate 203, and glutamate 204. Lysine 201 carries the N6-carboxylysine modification. Histidine 294 serves as the catalytic Proton acceptor. Residues arginine 295, histidine 327, and serine 379 each coordinate substrate.

It belongs to the RuBisCO large chain family. Type I subfamily. In terms of assembly, heterohexadecamer of 8 large chains and 8 small chains. Requires Mg(2+) as cofactor.

It is found in the plastid. It localises to the chloroplast. The catalysed reaction is 2 (2R)-3-phosphoglycerate + 2 H(+) = D-ribulose 1,5-bisphosphate + CO2 + H2O. It carries out the reaction D-ribulose 1,5-bisphosphate + O2 = 2-phosphoglycolate + (2R)-3-phosphoglycerate + 2 H(+). RuBisCO catalyzes two reactions: the carboxylation of D-ribulose 1,5-bisphosphate, the primary event in carbon dioxide fixation, as well as the oxidative fragmentation of the pentose substrate in the photorespiration process. Both reactions occur simultaneously and in competition at the same active site. In Stigeoclonium helveticum (Green alga), this protein is Ribulose bisphosphate carboxylase large chain.